The primary structure comprises 154 residues: Spermatogenesis-associated protein 19, mitochondrial (154 aa).

A mitochondrion-targeting transit peptide spans 1 to 24 (MIITTWIMYIFARKTVGLPFPPRV). 2 positions are modified to phosphoserine: Ser-26 and Ser-116.

In terms of tissue distribution, expressed specifically in adult testis (at protein level).

Its subcellular location is the mitochondrion outer membrane. The protein localises to the mitochondrion. The protein resides in the cell projection. It localises to the cilium. It is found in the flagellum. Functionally, essential for sperm motility and male fertility. Plays an important role in sperm motility by regulating the organization and function of the mitochondria and is also required for correct sperm midpiece assembly. The sequence is that of Spermatogenesis-associated protein 19, mitochondrial (Spata19) from Mus musculus (Mouse).